Consider the following 94-residue polypeptide: Exodeoxyribonuclease 7 small subunit (94 aa).

The segment at 1-21 (MPRAPNDAPSASATPSATPAS) is disordered.

This sequence belongs to the XseB family. Heterooligomer composed of large and small subunits.

It localises to the cytoplasm. The catalysed reaction is Exonucleolytic cleavage in either 5'- to 3'- or 3'- to 5'-direction to yield nucleoside 5'-phosphates.. Bidirectionally degrades single-stranded DNA into large acid-insoluble oligonucleotides, which are then degraded further into small acid-soluble oligonucleotides. This is Exodeoxyribonuclease 7 small subunit from Ralstonia pickettii (strain 12J).